The following is a 430-amino-acid chain: Phosphomethylpyrimidine synthase (430 aa).

Residues asparagine 67, methionine 96, tyrosine 125, histidine 161, 183–185, 224–227, and glutamate 263 each bind substrate; these read SRG and DALR. Zn(2+) is bound at residue histidine 267. Residue tyrosine 290 coordinates substrate. Histidine 331 contacts Zn(2+). Cysteine 406, cysteine 409, and cysteine 413 together coordinate [4Fe-4S] cluster.

The protein belongs to the ThiC family. In terms of assembly, homodimer. [4Fe-4S] cluster serves as cofactor.

It catalyses the reaction 5-amino-1-(5-phospho-beta-D-ribosyl)imidazole + S-adenosyl-L-methionine = 4-amino-2-methyl-5-(phosphooxymethyl)pyrimidine + CO + 5'-deoxyadenosine + formate + L-methionine + 3 H(+). It functions in the pathway cofactor biosynthesis; thiamine diphosphate biosynthesis. In terms of biological role, catalyzes the synthesis of the hydroxymethylpyrimidine phosphate (HMP-P) moiety of thiamine from aminoimidazole ribotide (AIR) in a radical S-adenosyl-L-methionine (SAM)-dependent reaction. The protein is Phosphomethylpyrimidine synthase of Campylobacter jejuni subsp. jejuni serotype O:6 (strain 81116 / NCTC 11828).